A 1357-amino-acid polypeptide reads, in one-letter code: DNA-directed RNA polymerase subunit beta (1357 aa).

It belongs to the RNA polymerase beta chain family. As to quaternary structure, the RNAP catalytic core consists of 2 alpha, 1 beta, 1 beta' and 1 omega subunit. When a sigma factor is associated with the core the holoenzyme is formed, which can initiate transcription.

It carries out the reaction RNA(n) + a ribonucleoside 5'-triphosphate = RNA(n+1) + diphosphate. DNA-dependent RNA polymerase catalyzes the transcription of DNA into RNA using the four ribonucleoside triphosphates as substrates. The sequence is that of DNA-directed RNA polymerase subunit beta from Pseudomonas entomophila (strain L48).